The sequence spans 141 residues: Hemoglobin subunit alpha-1 (141 aa).

In terms of domain architecture, Globin spans 1–141; sequence VLSGSDKNNV…VGNVLTAKYR (141 aa). Residue His-58 participates in O2 binding. His-87 lines the heme b pocket.

The protein belongs to the globin family. Heterotetramer of two alpha chains and two beta chains. As to expression, red blood cells.

In terms of biological role, involved in oxygen transport from the lung to the various peripheral tissues. The sequence is that of Hemoglobin subunit alpha-1 from Stercorarius maccormicki (South polar skua).